The following is a 150-amino-acid chain: Large ribosomal subunit protein bL9 (150 aa).

This sequence belongs to the bacterial ribosomal protein bL9 family.

Binds to the 23S rRNA. This chain is Large ribosomal subunit protein bL9, found in Shewanella denitrificans (strain OS217 / ATCC BAA-1090 / DSM 15013).